The following is a 1131-amino-acid chain: Tyrosine-protein kinase JAK2 (1131 aa).

The segment at 1–239 (MGMACLTMTE…RYRFRRFIEQ (239 aa)) is interaction with cytokine/interferon/growth hormone receptors. The 344-residue stretch at 37-380 (PVLQVYLYHS…GYYRLTADAH (344 aa)) folds into the FERM domain. Y119 carries the post-translational modification Phosphotyrosine; by autocatalysis. Phosphotyrosine is present on residues Y372 and Y373. An SH2; atypical domain is found at 401–482 (HGPISMDFAI…NLKDLLNCYQ (82 aa)). A Phosphoserine modification is found at S523. A Protein kinase 1 domain is found at 545-809 (LIFNESLGQG…AIIRDLNSLF (265 aa)). A phosphotyrosine mark is found at Y570 and Y813. The region spanning 849–1126 (LKFLQQLGKG…RDLALRVDQI (278 aa)) is the Protein kinase 2 domain. Residue 855-863 (LGKGNFGSV) participates in ATP binding. Phosphotyrosine; by autocatalysis is present on Y868. ATP is bound at residue K882. A phosphotyrosine; by autocatalysis mark is found at Y966 and Y972. D976 (proton acceptor) is an active-site residue. Phosphotyrosine; by autocatalysis occurs at positions 1007 and 1008.

Belongs to the protein kinase superfamily. Tyr protein kinase family. JAK subfamily. In terms of assembly, interacts with IL23R, SKB1 and STAM2. Interacts with EPOR. Interacts with LYN. Interacts with SIRPA. Interacts with SH2B1. Interacts with TEC. Interacts with IFNGR2 (via intracellular domain). Interacts with LEPR (Isoform B). Interacts with HSP90AB1; promotes functional activation in a heat shock-dependent manner. Interacts with STRA6. Interacts with ASB2; the interaction targets JAK2 for Notch-induced proteasomal degradation. Mg(2+) is required as a cofactor. In terms of processing, autophosphorylated, leading to regulate its activity. Leptin promotes phosphorylation on tyrosine residues, including phosphorylation on Tyr-813. Autophosphorylation on Tyr-119 in response to EPO down-regulates its kinase activity. Autophosphorylation on Tyr-868, Tyr-966 and Tyr-972 in response to growth hormone (GH) are required for maximal kinase activity. Also phosphorylated by TEC. Phosphorylated on tyrosine residues in response to interferon gamma signaling. Phosphorylated on tyrosine residues in response to a signaling cascade that is activated by increased cellular retinol. Post-translationally, undergoes Notch-induced ubiquitination and subsequent proteasomal degradation which is mediated by ASB1 or ASB2, the substrate-recognition components of probable ECS E3 ubiquitin-protein ligase complexes.

Its subcellular location is the endomembrane system. It is found in the cytoplasm. It localises to the nucleus. The catalysed reaction is L-tyrosyl-[protein] + ATP = O-phospho-L-tyrosyl-[protein] + ADP + H(+). With respect to regulation, regulated by autophosphorylation, can both activate or decrease activity. Heme regulates its activity by enhancing the phosphorylation on Tyr-1007 and Tyr-1008. In terms of biological role, non-receptor tyrosine kinase involved in various processes such as cell growth, development, differentiation or histone modifications. Mediates essential signaling events in both innate and adaptive immunity. In the cytoplasm, plays a pivotal role in signal transduction via its association with type I receptors such as growth hormone (GHR), prolactin (PRLR), leptin (LEPR), erythropoietin (EPOR), thrombopoietin (THPO); or type II receptors including IFN-alpha, IFN-beta, IFN-gamma and multiple interleukins. Following ligand-binding to cell surface receptors, phosphorylates specific tyrosine residues on the cytoplasmic tails of the receptor, creating docking sites for STATs proteins. Subsequently, phosphorylates the STATs proteins once they are recruited to the receptor. Phosphorylated STATs then form homodimer or heterodimers and translocate to the nucleus to activate gene transcription. For example, cell stimulation with erythropoietin (EPO) during erythropoiesis leads to JAK2 autophosphorylation, activation, and its association with erythropoietin receptor (EPOR) that becomes phosphorylated in its cytoplasmic domain. Then, STAT5 (STAT5A or STAT5B) is recruited, phosphorylated and activated by JAK2. Once activated, dimerized STAT5 translocates into the nucleus and promotes the transcription of several essential genes involved in the modulation of erythropoiesis. Part of a signaling cascade that is activated by increased cellular retinol and that leads to the activation of STAT5 (STAT5A or STAT5B). In addition, JAK2 mediates angiotensin-2-induced ARHGEF1 phosphorylation. Plays a role in cell cycle by phosphorylating CDKN1B. Cooperates with TEC through reciprocal phosphorylation to mediate cytokine-driven activation of FOS transcription. In the nucleus, plays a key role in chromatin by specifically mediating phosphorylation of 'Tyr-41' of histone H3 (H3Y41ph), a specific tag that promotes exclusion of CBX5 (HP1 alpha) from chromatin. Up-regulates the potassium voltage-gated channel activity of KCNA3. This chain is Tyrosine-protein kinase JAK2, found in Sus scrofa (Pig).